Consider the following 92-residue polypeptide: Co-chaperonin GroES (92 aa).

This sequence belongs to the GroES chaperonin family. Heptamer of 7 subunits arranged in a ring. Interacts with the chaperonin GroEL.

It localises to the cytoplasm. Functionally, together with the chaperonin GroEL, plays an essential role in assisting protein folding. The GroEL-GroES system forms a nano-cage that allows encapsulation of the non-native substrate proteins and provides a physical environment optimized to promote and accelerate protein folding. GroES binds to the apical surface of the GroEL ring, thereby capping the opening of the GroEL channel. The chain is Co-chaperonin GroES from Thermotoga petrophila (strain ATCC BAA-488 / DSM 13995 / JCM 10881 / RKU-1).